The primary structure comprises 285 residues: MKADLLQRFIFDELDIRGELLVLKKTVQDALSRHDYPQAIQSLLGQALSAGLLLSATLKIKGDTTLQATGEGELRLLMAEATHRRTARGIARWEGAPDSTSLKQLLGNRAALAITIAPQNGQRYQGIVPLSSDSLSACLEEYFERSEQLATRIWLYESNGCWGGLLLQQLPAARGGEYSAENWERIVALSATLTADELFSLPAEEVLHRLFHEESVRVLQEEPASFWCSCSEERTLEVVKSLGREEAFSILDESGEIEMNCQFCLQRYSFGRERIEQLFDSPTLH.

2 cysteine pairs are disulfide-bonded: cysteine 228–cysteine 230 and cysteine 261–cysteine 264.

Belongs to the HSP33 family. Under oxidizing conditions two disulfide bonds are formed involving the reactive cysteines. Under reducing conditions zinc is bound to the reactive cysteines and the protein is inactive.

The protein localises to the cytoplasm. Functionally, redox regulated molecular chaperone. Protects both thermally unfolding and oxidatively damaged proteins from irreversible aggregation. Plays an important role in the bacterial defense system toward oxidative stress. The sequence is that of 33 kDa chaperonin from Hahella chejuensis (strain KCTC 2396).